The chain runs to 91 residues: ATP synthase subunit c 2 (91 aa).

2 helical membrane-spanning segments follow: residues 4 to 24 and 53 to 73; these read FSMCVLGAAIGMAIGTLGTGI and IGLAMIESLAIYALVICLIIL.

Belongs to the ATPase C chain family. In terms of assembly, F-type ATPases have 2 components, F(1) - the catalytic core - and F(0) - the membrane proton channel. F(1) has five subunits: alpha(3), beta(3), gamma(1), delta(1), epsilon(1). F(0) has three main subunits: a(1), b(2) and c(10-14). The alpha and beta chains form an alternating ring which encloses part of the gamma chain. F(1) is attached to F(0) by a central stalk formed by the gamma and epsilon chains, while a peripheral stalk is formed by the delta and b chains.

Its subcellular location is the cell inner membrane. F(1)F(0) ATP synthase produces ATP from ADP in the presence of a proton or sodium gradient. F-type ATPases consist of two structural domains, F(1) containing the extramembraneous catalytic core and F(0) containing the membrane proton channel, linked together by a central stalk and a peripheral stalk. During catalysis, ATP synthesis in the catalytic domain of F(1) is coupled via a rotary mechanism of the central stalk subunits to proton translocation. In terms of biological role, key component of the F(0) channel; it plays a direct role in translocation across the membrane. A homomeric c-ring of between 10-14 subunits forms the central stalk rotor element with the F(1) delta and epsilon subunits. In Pelobacter propionicus (strain DSM 2379 / NBRC 103807 / OttBd1), this protein is ATP synthase subunit c 2.